A 247-amino-acid chain; its full sequence is MRYLDLNIKSILADWEIADAIRELIANAIDEHRLSNTAFPVIELQKGFLNSSLVIKDYGRGIKSNHFIQNESREKVQSEKTIGKFGIGLKDAIAVLFRHNVKVSFTSSEGTFTPVERMKEGMKDGTKTIQITVDETKKIDKGTDILISKISRSDYEKAIAIFLELRTGYQKLASSKKGDIYRSENGSEIFLNGMKIGTDENFLFSYDIKEPNKKLQKSLNRERKTLSRDSYRDNIISILKSSINKNT.

This sequence to M.pneumoniae MPN_635 N-terminal region.

This is an uncharacterized protein from Mycoplasma pneumoniae (strain ATCC 29342 / M129 / Subtype 1) (Mycoplasmoides pneumoniae).